The primary structure comprises 87 residues: Large ribosomal subunit protein bL31B (87 aa).

It belongs to the bacterial ribosomal protein bL31 family. Type B subfamily. In terms of assembly, part of the 50S ribosomal subunit.

This is Large ribosomal subunit protein bL31B from Latilactobacillus sakei subsp. sakei (strain 23K) (Lactobacillus sakei subsp. sakei).